A 90-amino-acid polypeptide reads, in one-letter code: Small ribosomal subunit protein uS15c (90 aa).

Belongs to the universal ribosomal protein uS15 family. As to quaternary structure, part of the 30S ribosomal subunit.

The protein localises to the plastid. It is found in the chloroplast. In Pelargonium hortorum (Common geranium), this protein is Small ribosomal subunit protein uS15c (rps15-A).